The sequence spans 441 residues: Putative collagenous domain-containing protein R238 (441 aa).

The 36-residue stretch at Gly164–Pro199 folds into the Collagen-like domain. The segment at Ile171–Glu198 is disordered. Positions Ile187–Glu198 are enriched in basic and acidic residues.

In Acanthamoeba polyphaga (Amoeba), this protein is Putative collagenous domain-containing protein R238.